The chain runs to 375 residues: Growth/differentiation factor 8 (375 aa).

The signal sequence occupies residues 1 to 23 (MQKLAVYVYIYLFVQISVDPVAL). A propeptide spanning residues 24–266 (DGSSQPTENT…VTDTPKRSRR (243 aa)) is cleaved from the precursor. Asn-71 carries N-linked (GlcNAc...) asparagine glycosylation. 4 disulfide bridges follow: Cys-272/Cys-282, Cys-281/Cys-340, Cys-309/Cys-372, and Cys-313/Cys-374.

This sequence belongs to the TGF-beta family. As to quaternary structure, homodimer; disulfide-linked.

The protein resides in the secreted. Acts specifically as a negative regulator of skeletal muscle growth. The protein is Growth/differentiation factor 8 (MSTN) of Excalfactoria chinensis (Blue-breasted quail).